Consider the following 232-residue polypeptide: Ribonuclease P protein component 3 (232 aa).

Belongs to the eukaryotic/archaeal RNase P protein component 3 family. Consists of a catalytic RNA component and at least 4-5 protein subunits. Forms a subcomplex with Rnp2 which stimulates the catalytic RNA.

It is found in the cytoplasm. The catalysed reaction is Endonucleolytic cleavage of RNA, removing 5'-extranucleotides from tRNA precursor.. In terms of biological role, part of ribonuclease P, a protein complex that generates mature tRNA molecules by cleaving their 5'-ends. The sequence is that of Ribonuclease P protein component 3 from Methanocaldococcus jannaschii (strain ATCC 43067 / DSM 2661 / JAL-1 / JCM 10045 / NBRC 100440) (Methanococcus jannaschii).